Here is a 212-residue protein sequence, read N- to C-terminus: GTP-binding protein EngB (212 aa).

In terms of domain architecture, EngB-type G spans 36–212; that stretch reads TAPEVAFAGR…LRAAVYDAII (177 aa). GTP is bound by residues 44 to 51, 71 to 75, 91 to 94, 158 to 161, and 192 to 194; these read GRSNVGKS, GRTQE, DMPG, TKSD, and TSS. 2 residues coordinate Mg(2+): serine 51 and threonine 73.

This sequence belongs to the TRAFAC class TrmE-Era-EngA-EngB-Septin-like GTPase superfamily. EngB GTPase family. Mg(2+) is required as a cofactor.

Necessary for normal cell division and for the maintenance of normal septation. This Zymomonas mobilis subsp. mobilis (strain ATCC 31821 / ZM4 / CP4) protein is GTP-binding protein EngB.